We begin with the raw amino-acid sequence, 432 residues long: Type I restriction enzyme MjaIX specificity subunit (432 aa).

It belongs to the type-I restriction system S methylase family. In terms of assembly, the type I restriction/modification system is composed of three polypeptides R, M and S.

Its function is as follows. The specificity (S) subunit of a type I restriction enzyme; this subunit dictates DNA sequence specificity. The M and S subunits together form a methyltransferase (MTase) that methylates A-3 on the top and A-2 on the bottom strand of the sequence 5'-CCAN(5)GTR-3'. In the presence of the R subunit the complex can also act as an endonuclease, binding to the same target sequence but cutting the DNA some distance from this site. Whether the DNA is cut or modified depends on the methylation state of the target sequence. When the target site is unmodified, the DNA is cut. When the target site is hemimethylated, the complex acts as a maintenance MTase modifying the DNA so that both strands become methylated. After locating a non-methylated recognition site, the enzyme complex serves as a molecular motor that translocates DNA in an ATP-dependent manner until a collision occurs that triggers cleavage. In Methanocaldococcus jannaschii (strain ATCC 43067 / DSM 2661 / JAL-1 / JCM 10045 / NBRC 100440) (Methanococcus jannaschii), this protein is Type I restriction enzyme MjaIX specificity subunit (hsdS).